A 150-amino-acid chain; its full sequence is Deoxyuridine 5'-triphosphate nucleotidohydrolase (150 aa).

Residues 70–72 (RSG), Asn-83, and 87–89 (TID) contribute to the substrate site.

The protein belongs to the dUTPase family. Mg(2+) serves as cofactor.

It catalyses the reaction dUTP + H2O = dUMP + diphosphate + H(+). It participates in pyrimidine metabolism; dUMP biosynthesis; dUMP from dCTP (dUTP route): step 2/2. Functionally, this enzyme is involved in nucleotide metabolism: it produces dUMP, the immediate precursor of thymidine nucleotides and it decreases the intracellular concentration of dUTP so that uracil cannot be incorporated into DNA. The chain is Deoxyuridine 5'-triphosphate nucleotidohydrolase from Desulfotalea psychrophila (strain LSv54 / DSM 12343).